We begin with the raw amino-acid sequence, 688 residues long: Polyphosphate kinase (688 aa).

Asn45 is a binding site for ATP. 2 residues coordinate Mg(2+): Arg375 and Arg405. In terms of domain architecture, PLD phosphodiesterase spans 430–464 (PGLKIHAKLFLISRKENGEVVRYAHIGTGNFNEKT). The active-site Phosphohistidine intermediate is the His435. Tyr468, Arg564, and His592 together coordinate ATP.

The protein belongs to the polyphosphate kinase 1 (PPK1) family. Mg(2+) serves as cofactor. Post-translationally, an intermediate of this reaction is the autophosphorylated ppk in which a phosphate is covalently linked to a histidine residue through a N-P bond.

The enzyme catalyses [phosphate](n) + ATP = [phosphate](n+1) + ADP. Functionally, catalyzes the reversible transfer of the terminal phosphate of ATP to form a long-chain polyphosphate (polyP). In Escherichia coli O157:H7, this protein is Polyphosphate kinase.